Consider the following 155-residue polypeptide: S-ribosylhomocysteine lyase (155 aa).

3 residues coordinate Fe cation: H58, H62, and C125.

Belongs to the LuxS family. As to quaternary structure, homodimer. Requires Fe cation as cofactor.

The enzyme catalyses S-(5-deoxy-D-ribos-5-yl)-L-homocysteine = (S)-4,5-dihydroxypentane-2,3-dione + L-homocysteine. In terms of biological role, involved in the synthesis of autoinducer 2 (AI-2) which is secreted by bacteria and is used to communicate both the cell density and the metabolic potential of the environment. The regulation of gene expression in response to changes in cell density is called quorum sensing. Catalyzes the transformation of S-ribosylhomocysteine (RHC) to homocysteine (HC) and 4,5-dihydroxy-2,3-pentadione (DPD). The polypeptide is S-ribosylhomocysteine lyase (Chromohalobacter salexigens (strain ATCC BAA-138 / DSM 3043 / CIP 106854 / NCIMB 13768 / 1H11)).